The chain runs to 674 residues: Translation factor GUF1, mitochondrial (674 aa).

Residues 1 to 33 (MLRPWFCFRSCVSLLSNRRQYGFRYLATAEPSK) constitute a mitochondrion transit peptide. A disordered region spans residues 32–51 (SKSEKPAKPVKPAKPMSVQE). The tr-type G domain maps to 75–257 (QNYRNFSIVA…SIIKNIPAPV (183 aa)). GTP contacts are provided by residues 84 to 91 (AHVDHGKS), 150 to 154 (DTPGH), and 204 to 207 (NKID).

It belongs to the TRAFAC class translation factor GTPase superfamily. Classic translation factor GTPase family. LepA subfamily.

The protein resides in the mitochondrion inner membrane. The catalysed reaction is GTP + H2O = GDP + phosphate + H(+). Functionally, promotes mitochondrial protein synthesis. May act as a fidelity factor of the translation reaction, by catalyzing a one-codon backward translocation of tRNAs on improperly translocated ribosomes. Binds to mitochondrial ribosomes in a GTP-dependent manner. This is Translation factor GUF1, mitochondrial from Lodderomyces elongisporus (strain ATCC 11503 / CBS 2605 / JCM 1781 / NBRC 1676 / NRRL YB-4239) (Yeast).